A 247-amino-acid chain; its full sequence is MTILFLTMVISYFGCMKAAPMKEANVRGQGSLAYPGVRTHGTLESVNGPKAGSRGLTSLADTFEHVIEELLDEDQKVRPNEENNKDADLYTSRVMLSSQVPLEPPLLFLLEEYKNYLDAANMSMRVRRHSDPARRGELSVCDSISEWVTAADKKTAVDMSGGTVTVLEKVPVSKGQLKQYFYETKCNPMGYTKEGCRGIDKRHWNSQCRTTQSYVRALTMDSKKRIGWRFIRIDTSCVCTLTIKRGR.

The N-terminal stretch at 1–18 is a signal peptide; the sequence is MTILFLTMVISYFGCMKA. Residues 19–128 constitute a propeptide that is removed on maturation; that stretch reads APMKEANVRG…AANMSMRVRR (110 aa). Asn-121 is a glycosylation site (N-linked (GlcNAc...) asparagine). Intrachain disulfides connect Cys-141-Cys-208, Cys-186-Cys-237, and Cys-196-Cys-239.

Belongs to the NGF-beta family. As to quaternary structure, monomers and homodimers. Binds to NTRK2/TRKB. Can form heterodimers with other neurotrophin family members, such as NTF3 and NTF4 (in vitro), but the physiological relevance of this is not clear. BDNF precursor form: interacts with the heterodimer formed by NGFR and SORCS2. Mature BDNF has much lower affinity for the heterodimer formed by NGFR and SORCS2. Post-translationally, N-glycosylated and glycosulfated, contrary to mature BDNF. Mature BDNF is produced by proteolytic removal of the propeptide, catalyzed by a FURIN family member. In addition, the precursor form is proteolytically cleaved within the propeptide, but this is not an obligatory intermediate for the production of mature BDNF. Can be converted into mature BDNF by plasmin (PLG).

The protein resides in the secreted. Its function is as follows. Important signaling molecule that activates signaling cascades downstream of NTRK2. During development, promotes the survival and differentiation of selected neuronal populations of the peripheral and central nervous systems. Participates in axonal growth, pathfinding and in the modulation of dendritic growth and morphology. Major regulator of synaptic transmission and plasticity at adult synapses in many regions of the CNS. The versatility of BDNF is emphasized by its contribution to a range of adaptive neuronal responses including long-term potentiation (LTP), long-term depression (LTD), certain forms of short-term synaptic plasticity, as well as homeostatic regulation of intrinsic neuronal excitability. Important signaling molecule that activates signaling cascades downstream of NTRK2. Activates signaling cascades via the heterodimeric receptor formed by NGFR and SORCS2. Signaling via NGFR and SORCS2 plays a role in synaptic plasticity and long-term depression (LTD). Binding to NGFR and SORCS2 promotes neuronal apoptosis. Promotes neuronal growth cone collapse. In Ailuropoda melanoleuca (Giant panda), this protein is Neurotrophic factor BDNF precursor form (BDNF).